Consider the following 627-residue polypeptide: Protein EXECUTER 2, chloroplastic (627 aa).

Disordered regions lie at residues 1 to 34 (MSAATACASPAAARPPLHIPLRSPPSAAHLPSAA), 212 to 277 (PTKG…AKDS), and 308 to 359 (EAEL…SKSP). The N-terminal 45 residues, 1-45 (MSAATACASPAAARPPLHIPLRSPPSAAHLPSAAASRRASSAACR), are a transit peptide targeting the chloroplast. The span at 217–229 (SSASSVSSATAES) shows a compositional bias: low complexity. Acidic residues-rich tracts occupy residues 308–321 (EAELASDSSEELVQ) and 331–353 (SLEDSTTEELQQDDVPDGDSDSA).

It localises to the plastid. It is found in the chloroplast. In terms of biological role, together with EX1, enables higher plants to perceive singlet oxygen as a stress signal in plastid that activates a genetically determined nuclear stress response program which triggers a programmed cell death (PCD). This transfer of singlet oxygen-induced stress-related signals from the plastid to the nucleus that triggers genetically controlled PCD pathway is unique to photosynthetic eukaryotes and operates under mild stress conditions, impeding photosystem II (PSII) without causing photooxidative damage of the plant. The chain is Protein EXECUTER 2, chloroplastic from Oryza sativa subsp. japonica (Rice).